The primary structure comprises 161 residues: Anaerobic nitrite reductase Hb2 (161 aa).

In terms of domain architecture, Globin spans 8-157; sequence GFSEEQEALV…LVDAIKSEMK (150 aa). The short motif at 41–45 is the Homodimerization element; the sequence is EIAPS. Residues S51, K65, H69, K99, T103, and H104 each contribute to the heme b site. The short motif at 111-123 is the Homodimerization element; that stretch reads NEHFEVTKFALLE.

It belongs to the plant globin family. Homodimer. Heme b serves as cofactor. In terms of tissue distribution, predominantly expressed in roots, cotyledons, stems and nodules (confined to some cells associated with the nitrogen-fixing Bradyrhizobium symbiont), and, to a lower extent, in flowers, young leaves, pods and seeds.

Its subcellular location is the cytoplasm. The protein localises to the nucleus. The catalysed reaction is Fe(III)-heme b-[protein] + nitric oxide + H2O = Fe(II)-heme b-[protein] + nitrite + 2 H(+). Phytoglobin that reduces nitrite to nitric oxide (NO) under anoxic conditions (e.g. during flooding or in waterlogged soil) and upon root nodulation. Required for general plant development and during nodulation, especially for the onset of symbiosis. Monitors nitric oxide (NO) levels during early phase of the nitrogen-fixing symbiosis and buffers oxygen in functioning nodules. May not function as an oxygen storage or transport protein. Has an unusually high affinity for O(2) through a hexacoordinate heme iron because of a very low dissociation constant. Involved in water stress tolerance. The chain is Anaerobic nitrite reductase Hb2 from Glycine max (Soybean).